Consider the following 164-residue polypeptide: Phosphopantetheine adenylyltransferase (164 aa).

A substrate-binding site is contributed by Ser10. ATP contacts are provided by residues 10–11 (SF) and His18. 3 residues coordinate substrate: Lys42, Leu74, and Arg88. ATP contacts are provided by residues 89–91 (GLR), Glu99, and 124–130 (YAFLSSS).

It belongs to the bacterial CoaD family. In terms of assembly, homohexamer. The cofactor is Mg(2+).

Its subcellular location is the cytoplasm. It catalyses the reaction (R)-4'-phosphopantetheine + ATP + H(+) = 3'-dephospho-CoA + diphosphate. It functions in the pathway cofactor biosynthesis; coenzyme A biosynthesis; CoA from (R)-pantothenate: step 4/5. In terms of biological role, reversibly transfers an adenylyl group from ATP to 4'-phosphopantetheine, yielding dephospho-CoA (dPCoA) and pyrophosphate. The chain is Phosphopantetheine adenylyltransferase from Geobacillus thermodenitrificans (strain NG80-2).